Consider the following 386-residue polypeptide: O-methyltransferase 11 (386 aa).

Positions 207, 231, 254, 274, and 288 each coordinate S-adenosyl-L-homocysteine. D254 provides a ligand contact to S-adenosyl-L-methionine. H292 functions as the Proton acceptor in the catalytic mechanism.

This sequence belongs to the class I-like SAM-binding methyltransferase superfamily. Cation-independent O-methyltransferase family. As to quaternary structure, homodimer.

The enzyme catalyses dopamine + S-adenosyl-L-methionine = 4-methoxytyramine + S-adenosyl-L-homocysteine + H(+). The catalysed reaction is 3,4-dihydroxy-5-methoxyphenethylamine + S-adenosyl-L-methionine = 3-hydroxy-4,5-dimethoxyphenethylamine + S-adenosyl-L-homocysteine + H(+). It carries out the reaction 3-hydroxy-4,5-dimethoxyphenethylamine + S-adenosyl-L-methionine = mescaline + S-adenosyl-L-homocysteine + H(+). It catalyses the reaction 4-hydroxy-3,5-dimethoxyphenethylamine + S-adenosyl-L-methionine = mescaline + S-adenosyl-L-homocysteine + H(+). Its pathway is aromatic compound metabolism. It participates in alkaloid biosynthesis. O-methyltransferase participating in the biosynthesis of natural products derived from phenylethylamine, including mescaline, a natural hallucinogen potentially used in psychotherapeutic treatments. Catalyzes the O-methylation of mescaline para hydroxyl groups, using dopamine, 3,4-dihydroxy-5-methoxyphenethylamine, 3-hydroxy-4,5-dimethoxyphenethylamine and 4-hydroxy-3,5-dimethoxyphenethylamine as substrates. The polypeptide is O-methyltransferase 11 (Lophophora williamsii (Peyote)).